The following is an 83-amino-acid chain: Small ribosomal subunit protein bS16 (83 aa).

Belongs to the bacterial ribosomal protein bS16 family.

The chain is Small ribosomal subunit protein bS16 from Borrelia turicatae (strain 91E135).